The sequence spans 517 residues: Ribonuclease Y (517 aa).

Residues 1-21 (MIEFLIGLIAAVVGILVGYLI) traverse the membrane as a helical segment. Residues 207–271 (LINVVNIKND…IAVRTVELLV (65 aa)) form the KH domain. Residues 333–426 (ALIHSLEVAH…VCTADVLSAA (94 aa)) form the HD domain.

Belongs to the RNase Y family.

It localises to the cell membrane. Its function is as follows. Endoribonuclease that initiates mRNA decay. This is Ribonuclease Y from Campylobacter hominis (strain ATCC BAA-381 / DSM 21671 / CCUG 45161 / LMG 19568 / NCTC 13146 / CH001A).